Here is an 81-residue protein sequence, read N- to C-terminus: Photosystem I iron-sulfur center (81 aa).

4Fe-4S ferredoxin-type domains follow at residues 2-31 (SHFVKIYDTCIGCTQCVRACPTDVLEMIPW) and 39-68 (IASAPRTEDCVGCKRCESACPTDFLSVRVY). 8 residues coordinate [4Fe-4S] cluster: C11, C14, C17, C21, C48, C51, C54, and C58.

As to quaternary structure, the eukaryotic PSI reaction center is composed of at least 11 subunits. The cofactor is [4Fe-4S] cluster.

The protein localises to the plastid thylakoid membrane. It catalyses the reaction reduced [plastocyanin] + hnu + oxidized [2Fe-2S]-[ferredoxin] = oxidized [plastocyanin] + reduced [2Fe-2S]-[ferredoxin]. Apoprotein for the two 4Fe-4S centers FA and FB of photosystem I (PSI); essential for photochemical activity. FB is the terminal electron acceptor of PSI, donating electrons to ferredoxin. The C-terminus interacts with PsaA/B/D and helps assemble the protein into the PSI complex. Required for binding of PsaD and PsaE to PSI. PSI is a plastocyanin-ferredoxin oxidoreductase, converting photonic excitation into a charge separation, which transfers an electron from the donor P700 chlorophyll pair to the spectroscopically characterized acceptors A0, A1, FX, FA and FB in turn. The polypeptide is Photosystem I iron-sulfur center (Cuscuta exaltata (Tall dodder)).